The sequence spans 116 residues: Ribosome-binding factor A (116 aa).

This sequence belongs to the RbfA family. In terms of assembly, monomer. Binds 30S ribosomal subunits, but not 50S ribosomal subunits or 70S ribosomes.

The protein localises to the cytoplasm. In terms of biological role, one of several proteins that assist in the late maturation steps of the functional core of the 30S ribosomal subunit. Associates with free 30S ribosomal subunits (but not with 30S subunits that are part of 70S ribosomes or polysomes). Required for efficient processing of 16S rRNA. May interact with the 5'-terminal helix region of 16S rRNA. This Staphylococcus epidermidis (strain ATCC 35984 / DSM 28319 / BCRC 17069 / CCUG 31568 / BM 3577 / RP62A) protein is Ribosome-binding factor A.